A 153-amino-acid chain; its full sequence is Ribonuclease H (153 aa).

In terms of domain architecture, RNase H type-1 spans 1–141; it reads MKHIEIYTDG…CDVLARDAAS (141 aa). Aspartate 9, glutamate 47, aspartate 69, and aspartate 133 together coordinate Mg(2+).

This sequence belongs to the RNase H family. In terms of assembly, monomer. Requires Mg(2+) as cofactor.

The protein resides in the cytoplasm. It carries out the reaction Endonucleolytic cleavage to 5'-phosphomonoester.. In terms of biological role, endonuclease that specifically degrades the RNA of RNA-DNA hybrids. The protein is Ribonuclease H of Pseudoalteromonas atlantica (strain T6c / ATCC BAA-1087).